The following is a 206-amino-acid chain: Small ribosomal subunit protein uS4 (206 aa).

One can recognise an S4 RNA-binding domain in the interval 96–156; the sequence is GRLDNVVYRM…EKAKKQSRVK (61 aa).

The protein belongs to the universal ribosomal protein uS4 family. As to quaternary structure, part of the 30S ribosomal subunit. Contacts protein S5. The interaction surface between S4 and S5 is involved in control of translational fidelity.

Functionally, one of the primary rRNA binding proteins, it binds directly to 16S rRNA where it nucleates assembly of the body of the 30S subunit. With S5 and S12 plays an important role in translational accuracy. The protein is Small ribosomal subunit protein uS4 of Yersinia enterocolitica serotype O:8 / biotype 1B (strain NCTC 13174 / 8081).